The chain runs to 319 residues: Beta-ketoacyl-[acyl-carrier-protein] synthase III (319 aa).

Active-site residues include Cys113 and His246. Residues 247–251 are ACP-binding; it reads QANLR. Asn276 is a catalytic residue.

This sequence belongs to the thiolase-like superfamily. FabH family. In terms of assembly, homodimer.

It is found in the cytoplasm. The catalysed reaction is malonyl-[ACP] + acetyl-CoA + H(+) = 3-oxobutanoyl-[ACP] + CO2 + CoA. Its pathway is lipid metabolism; fatty acid biosynthesis. In terms of biological role, catalyzes the condensation reaction of fatty acid synthesis by the addition to an acyl acceptor of two carbons from malonyl-ACP. Catalyzes the first condensation reaction which initiates fatty acid synthesis and may therefore play a role in governing the total rate of fatty acid production. Possesses both acetoacetyl-ACP synthase and acetyl transacylase activities. Its substrate specificity determines the biosynthesis of branched-chain and/or straight-chain of fatty acids. This is Beta-ketoacyl-[acyl-carrier-protein] synthase III from Laribacter hongkongensis (strain HLHK9).